The chain runs to 448 residues: Integrator complex subunit 15 (448 aa).

This sequence belongs to the Integrator subunit 15 family. As to quaternary structure, component of the Integrator complex, composed of core subunits INTS1, INTS2, INTS3, INTS4, INTS5, INTS6, INTS7, INTS8, INTS9/RC74, INTS10, INTS11/CPSF3L, INTS12, INTS13, INTS14 and INTS15. The core complex associates with protein phosphatase 2A subunits PPP2CA and PPP2R1A, to form the Integrator-PP2A (INTAC) complex. INTS15 is part of the tail subcomplex, composed of INTS10, INTS13, INTS14 and INTS15.

The protein localises to the nucleus. It is found in the chromosome. Its function is as follows. Component of the integrator complex, a multiprotein complex that terminates RNA polymerase II (Pol II) transcription in the promoter-proximal region of genes. The integrator complex provides a quality checkpoint during transcription elongation by driving premature transcription termination of transcripts that are unfavorably configured for transcriptional elongation: the complex terminates transcription by (1) catalyzing dephosphorylation of the C-terminal domain (CTD) of Pol II subunit POLR2A/RPB1 and SUPT5H/SPT5, (2) degrading the exiting nascent RNA transcript via endonuclease activity and (3) promoting the release of Pol II from bound DNA. The integrator complex is also involved in terminating the synthesis of non-coding Pol II transcripts, such as enhancer RNAs (eRNAs), small nuclear RNAs (snRNAs), telomerase RNAs and long non-coding RNAs (lncRNAs). INTS15 is part of the integrator tail module that acts as a platform for the recruitment of transcription factors at promoters. Within the integrator complex, INTS15 is required to bridge different integrator modules. The chain is Integrator complex subunit 15 from Mus musculus (Mouse).